Here is an 869-residue protein sequence, read N- to C-terminus: Protein translocase subunit SecA (869 aa).

Residues Q88, 106 to 110 (GEGKT), and D509 each bind ATP. Basic and acidic residues predominate over residues 818 to 840 (QDEGLKFNQREGEDAPAVREKKI). The segment at 818–869 (QDEGLKFNQREGEDAPAVREKKIPRNSPCPCGSGKKYKDCCGKSGPKKGILA) is disordered. 4 residues coordinate Zn(2+): C846, C848, C857, and C858.

This sequence belongs to the SecA family. Monomer and homodimer. Part of the essential Sec protein translocation apparatus which comprises SecA, SecYEG and auxiliary proteins SecDF-YajC and YidC. Zn(2+) serves as cofactor.

The protein resides in the cell inner membrane. It is found in the cytoplasm. It catalyses the reaction ATP + H2O + cellular proteinSide 1 = ADP + phosphate + cellular proteinSide 2.. Its function is as follows. Part of the Sec protein translocase complex. Interacts with the SecYEG preprotein conducting channel. Has a central role in coupling the hydrolysis of ATP to the transfer of proteins into and across the cell membrane, serving as an ATP-driven molecular motor driving the stepwise translocation of polypeptide chains across the membrane. The sequence is that of Protein translocase subunit SecA from Campylobacter curvus (strain 525.92).